Reading from the N-terminus, the 241-residue chain is Uridylate kinase (241 aa).

Residue 12–15 (KVSG) participates in ATP binding. Positions 20-25 (GEKGTG) are involved in allosteric activation by GTP. Gly-54 contacts UMP. ATP contacts are provided by Gly-55 and Arg-59. Residues Asp-74 and 135–142 (TGNPYFST) each bind UMP. ATP is bound by residues Asn-163, Tyr-169, and Asp-172.

The protein belongs to the UMP kinase family. Homohexamer.

It localises to the cytoplasm. The catalysed reaction is UMP + ATP = UDP + ADP. The protein operates within pyrimidine metabolism; CTP biosynthesis via de novo pathway; UDP from UMP (UMPK route): step 1/1. With respect to regulation, allosterically activated by GTP. Inhibited by UTP. Catalyzes the reversible phosphorylation of UMP to UDP. This is Uridylate kinase from Lactobacillus johnsonii (strain CNCM I-12250 / La1 / NCC 533).